The primary structure comprises 527 residues: Serine/threonine-protein kinase NLK (527 aa).

2 sufficient for interaction with DAPK3 regions span residues 1-125 (MSLC…KAHH) and 124-416 (HHHQ…SKRI). Required for interaction with TAB2 regions lie at residues 1–304 (MSLC…VVTQ) and 434–527 (YHTC…LVWE). Disordered regions lie at residues 22–72 (AAAA…SSAA) and 90–139 (QQPY…LDIE). A compositionally biased stretch (basic residues) spans 26-54 (GHHHHHHHHLPHLPPPHLHHHHHPQHHLH). The span at 103 to 119 (PGPAAAAPAQVQAAAAA) shows a compositional bias: low complexity. Basic residues predominate over residues 122–131 (KAHHHQHSHH). Positions 138–427 (IEPDRPIGYG…AKDALAHPYL (290 aa)) constitute a Protein kinase domain. Residues 144 to 152 (IGYGAFGVV) and Lys167 each bind ATP. The active-site Proton acceptor is Asp264. Thr298 carries the phosphothreonine; by autocatalysis modification. Positions 298–300 (TQE) match the TQE motif. The required for homodimerization and kinase activation and localization to the nucleus stretch occupies residues 428-527 (DEGRLRYHTC…EMPPSPLVWE (100 aa)). Ser522 carries the post-translational modification Phosphoserine.

Belongs to the protein kinase superfamily. CMGC Ser/Thr protein kinase family. MAP kinase subfamily. In terms of assembly, homodimer. Homodimerization is required for intermolecular autophosphorylation, kinase activation and nuclear localization. Interacts with RNF138/NARF. Interacts with FOXO1 and FOXO3. Interacts with the upstream activating kinases HIPK2 and MAP3K7/TAK1. Interaction with MAP3K7/TAK1 seems to be indirect, and may be mediated by other proteins such as STAT3, TAB1 and TAB2. Interacts with and phosphorylates a number of transcription factors including FOXO4, LEF1, MYB, MYBL1, MYBL2, NOTCH1 and TCF7L2/TCF4. May interact with components of cullin-RING-based SCF (SKP1-CUL1-F-box protein) E3 ubiquitin-protein ligase complexes. Interacts with MEF2A. Interacts with ATF5; the interaction stabilizes ATF5 at the protein level in a kinase-independent manner. It depends on Mg(2+) as a cofactor. In terms of processing, phosphorylated on Thr-298. Intermolecular autophosphorylation on Thr-298 activates the enzyme. As to expression, expressed at high levels in the brain, and at lower levels in heart, kidney, lung and liver.

Its subcellular location is the nucleus. It is found in the cytoplasm. The catalysed reaction is L-seryl-[protein] + ATP = O-phospho-L-seryl-[protein] + ADP + H(+). The enzyme catalyses L-threonyl-[protein] + ATP = O-phospho-L-threonyl-[protein] + ADP + H(+). With respect to regulation, activated by the non-canonical Wnt signaling pathway, in which WNT5A leads to activation of MAP3K7/TAK1 and HIPK2, which subsequently phosphorylates and activates this protein. Activated by dimerization and subsequent intermolecular autophosphorylation on Thr-298. Other cytokines such as IL6 may also activate this regulatory circuit. Its function is as follows. Serine/threonine-protein kinase that regulates a number of transcription factors with key roles in cell fate determination. Positive effector of the non-canonical Wnt signaling pathway, acting downstream of WNT5A, MAP3K7/TAK1 and HIPK2. Negative regulator of the canonical Wnt/beta-catenin signaling pathway. Binds to and phosphorylates TCF7L2/TCF4 and LEF1, promoting the dissociation of the TCF7L2/LEF1/beta-catenin complex from DNA, as well as the ubiquitination and subsequent proteolysis of LEF1. Together these effects inhibit the transcriptional activation of canonical Wnt/beta-catenin target genes. Negative regulator of the Notch signaling pathway. Binds to and phosphorylates NOTCH1, thereby preventing the formation of a transcriptionally active ternary complex of NOTCH1, RBPJ/RBPSUH and MAML1. Negative regulator of the MYB family of transcription factors. Phosphorylation of MYB leads to its subsequent proteolysis while phosphorylation of MYBL1 and MYBL2 inhibits their interaction with the coactivator CREBBP. Other transcription factors may also be inhibited by direct phosphorylation of CREBBP itself. Acts downstream of IL6 and MAP3K7/TAK1 to phosphorylate STAT3, which is in turn required for activation of NLK by MAP3K7/TAK1. Upon IL1B stimulus, cooperates with ATF5 to activate the transactivation activity of C/EBP subfamily members. Phosphorylates ATF5 but also stabilizes ATF5 protein levels in a kinase-independent manner. Acts as an inhibitor of the mTORC1 complex in response to osmotic stress by mediating phosphorylation of RPTOR, thereby preventing recruitment of the mTORC1 complex to lysosomes. This chain is Serine/threonine-protein kinase NLK, found in Mus musculus (Mouse).